Reading from the N-terminus, the 112-residue chain is Class I hydrophobin 7 (112 aa).

The first 23 residues, 1-23 (MFARQATSVSAFLVLTLSLFAAA), serve as a signal peptide directing secretion. 4 disulfides stabilise this stretch: C36–C93, C43–C87, C44–C74, and C94–C107. Residue N96 is glycosylated (N-linked (GlcNAc...) asparagine).

It belongs to the fungal hydrophobin family. Self-assembles to form functional amyloid fibrils called rodlets. Self-assembly into fibrillar rodlets occurs spontaneously at hydrophobic:hydrophilic interfaces and the rodlets further associate laterally to form amphipathic monolayers.

The protein resides in the secreted. It is found in the cell wall. In terms of biological role, aerial growth, conidiation, and dispersal of filamentous fungi in the environment rely upon a capability of their secreting small amphipathic proteins called hydrophobins (HPBs) with low sequence identity. Class I can self-assemble into an outermost layer of rodlet bundles on aerial cell surfaces, conferring cellular hydrophobicity that supports fungal growth, development and dispersal; whereas Class II form highly ordered films at water-air interfaces through intermolecular interactions but contribute nothing to the rodlet structure. This chain is Class I hydrophobin 7, found in Flammulina velutipes (Agaricus velutipes).